The sequence spans 607 residues: Elongation factor 4 (607 aa).

One can recognise a tr-type G domain in the interval 11 to 193 (ENIRNFSIIA…KIVDVVPAPD (183 aa)). Residues 23 to 28 (DHGKST) and 140 to 143 (NKID) each bind GTP.

It belongs to the TRAFAC class translation factor GTPase superfamily. Classic translation factor GTPase family. LepA subfamily.

Its subcellular location is the cell membrane. It carries out the reaction GTP + H2O = GDP + phosphate + H(+). Its function is as follows. Required for accurate and efficient protein synthesis under certain stress conditions. May act as a fidelity factor of the translation reaction, by catalyzing a one-codon backward translocation of tRNAs on improperly translocated ribosomes. Back-translocation proceeds from a post-translocation (POST) complex to a pre-translocation (PRE) complex, thus giving elongation factor G a second chance to translocate the tRNAs correctly. Binds to ribosomes in a GTP-dependent manner. This chain is Elongation factor 4, found in Staphylococcus epidermidis (strain ATCC 35984 / DSM 28319 / BCRC 17069 / CCUG 31568 / BM 3577 / RP62A).